The following is a 94-amino-acid chain: Cytochrome b-c1 complex subunit 8, mitochondrial (94 aa).

Over 2 to 49 (GPPSGKTYMGWWGHMGGPKQKGITSYAVSPYAQKPLQGIFHNAVFNSF) the chain is Mitochondrial matrix. The helical transmembrane segment at 50-80 (RRFKSQFLYVLIPAGIYWYWWKNGNEYNEFL) threads the bilayer. Topologically, residues 81–94 (YSKAGREELERVNV) are mitochondrial intermembrane.

The protein belongs to the UQCRQ/QCR8 family. In terms of assembly, component of the ubiquinol-cytochrome c oxidoreductase (cytochrome b-c1 complex, complex III, CIII), a multisubunit enzyme composed of 10 subunits. The complex is composed of 3 respiratory subunits cytochrome b (COB), cytochrome c1 (CYT1) and Rieske protein (RIP1), 2 core protein subunits COR1 and QCR2, and 5 low-molecular weight protein subunits QCR6, QCR7, QCR8, QCR9 and QCR10. The complex exists as an obligatory dimer and forms supercomplexes (SCs) in the inner mitochondrial membrane with a monomer or a dimer of cytochrome c oxidase (complex IV, CIV), resulting in 2 different assemblies (supercomplexes III(2)IV and III(2)IV(2)).

Its subcellular location is the mitochondrion inner membrane. Functionally, component of the ubiquinol-cytochrome c oxidoreductase, a multisubunit transmembrane complex that is part of the mitochondrial electron transport chain which drives oxidative phosphorylation. The respiratory chain contains 3 multisubunit complexes succinate dehydrogenase (complex II, CII), ubiquinol-cytochrome c oxidoreductase (cytochrome b-c1 complex, complex III, CIII) and cytochrome c oxidase (complex IV, CIV), that cooperate to transfer electrons derived from NADH and succinate to molecular oxygen, creating an electrochemical gradient over the inner membrane that drives transmembrane transport and the ATP synthase. The cytochrome b-c1 complex catalyzes electron transfer from ubiquinol to cytochrome c, linking this redox reaction to translocation of protons across the mitochondrial inner membrane, with protons being carried across the membrane as hydrogens on the quinol. In the process called Q cycle, 2 protons are consumed from the matrix, 4 protons are released into the intermembrane space and 2 electrons are passed to cytochrome c. In Saccharomyces cerevisiae (strain ATCC 204508 / S288c) (Baker's yeast), this protein is Cytochrome b-c1 complex subunit 8, mitochondrial (QCR8).